Consider the following 23-residue polypeptide: Superoxide dismutase [Mn], mitochondrial (23 aa).

Belongs to the iron/manganese superoxide dismutase family. In terms of assembly, homotetramer. Requires Mn(2+) as cofactor.

The protein resides in the mitochondrion matrix. The enzyme catalyses 2 superoxide + 2 H(+) = H2O2 + O2. Destroys superoxide anion radicals which are normally produced within the cells and which are toxic to biological systems. The protein is Superoxide dismutase [Mn], mitochondrial of Aquarana catesbeiana (American bullfrog).